An 81-amino-acid polypeptide reads, in one-letter code: Sulfur carrier protein TusA (81 aa).

The active-site Cysteine persulfide intermediate is C19.

This sequence belongs to the sulfur carrier protein TusA family.

The protein localises to the cytoplasm. Functionally, sulfur carrier protein which probably makes part of a sulfur-relay system. The chain is Sulfur carrier protein TusA from Shewanella denitrificans (strain OS217 / ATCC BAA-1090 / DSM 15013).